A 203-amino-acid polypeptide reads, in one-letter code: Glycerol-3-phosphate acyltransferase (203 aa).

Transmembrane regions (helical) follow at residues 13 to 33 (TLAC…LILT), 62 to 82 (LAAA…AIAS), 88 to 108 (AGIA…WLSF), 118 to 138 (IGVL…IWLA), and 159 to 179 (IALY…MTAI).

This sequence belongs to the PlsY family. As to quaternary structure, probably interacts with PlsX.

The protein localises to the cell inner membrane. It carries out the reaction an acyl phosphate + sn-glycerol 3-phosphate = a 1-acyl-sn-glycero-3-phosphate + phosphate. The protein operates within lipid metabolism; phospholipid metabolism. Catalyzes the transfer of an acyl group from acyl-phosphate (acyl-PO(4)) to glycerol-3-phosphate (G3P) to form lysophosphatidic acid (LPA). This enzyme utilizes acyl-phosphate as fatty acyl donor, but not acyl-CoA or acyl-ACP. The chain is Glycerol-3-phosphate acyltransferase from Rhizobium meliloti (strain 1021) (Ensifer meliloti).